A 294-amino-acid chain; its full sequence is Cyclin-dependent kinase A-1 (294 aa).

A Protein kinase domain is found at 4-287; the sequence is YEKEEKIGEG…ARQALEHEYF (284 aa). ATP-binding positions include 10-18 and Lys-33; that span reads IGEGTYGVV. A Phosphothreonine modification is found at Thr-14. Residue Tyr-15 is modified to Phosphotyrosine. Catalysis depends on Asp-127, which acts as the Proton acceptor. Phosphothreonine; by CAK is present on Thr-161.

It belongs to the protein kinase superfamily. CMGC Ser/Thr protein kinase family. CDC2/CDKX subfamily. Phosphorylated at Thr-161 by CDKD-1. Expressed in the dividing region of the root apex and in differentiated cells such as those in the sclerenchyma, pericycle and parenchyma of the central cylinder.

The enzyme catalyses L-seryl-[protein] + ATP = O-phospho-L-seryl-[protein] + ADP + H(+). The catalysed reaction is L-threonyl-[protein] + ATP = O-phospho-L-threonyl-[protein] + ADP + H(+). It catalyses the reaction [DNA-directed RNA polymerase] + ATP = phospho-[DNA-directed RNA polymerase] + ADP + H(+). The chain is Cyclin-dependent kinase A-1 (CDKA-1) from Oryza sativa subsp. japonica (Rice).